A 165-amino-acid polypeptide reads, in one-letter code: C-phycoerythrin class 2 subunit alpha (165 aa).

Phycourobilin-binding residues include cysteine 75, cysteine 83, and cysteine 140.

This sequence belongs to the phycobiliprotein family. As to quaternary structure, heterodimer of an alpha and a beta chain. In terms of processing, contains three covalently linked phycourobilin chromophores.

It localises to the cellular thylakoid membrane. Its function is as follows. Light-harvesting photosynthetic bile pigment-protein from the phycobiliprotein complex. This is C-phycoerythrin class 2 subunit alpha (mpeA) from Synechococcus sp. (strain WH8103).